Consider the following 491-residue polypeptide: Keratin, type II microfibrillar, component 7C (491 aa).

C1 carries the post-translational modification Blocked amino end (Cys). Residues 1 to 109 (CGFSTVGSGF…PNAQCVKQEE (109 aa)) are head. The region spanning 109 to 420 (EKEQIKCLNN…RLLEGEEQRL (312 aa)) is the IF rod domain. The interval 110–144 (KEQIKCLNNRFAAFIDKVRFLEQQNKLLETKLQFF) is coil 1A. Residues 145–154 (QNRQCCESNL) are linker 1. The interval 155–255 (EPLFEGYIET…YQEEIRVLQA (101 aa)) is coil 1B. Residues 256 to 272 (NISDTSVIVKMDNSRDL) form a linker 12 region. Residues 273–416 (NMDCIVAEIK…ATYRRLLEGE (144 aa)) form a coil 2 region. The tail stretch occupies residues 417–491 (EQRLCEGVGA…GGGSCSLGRC (75 aa)).

Belongs to the intermediate filament family.

Its function is as follows. Wool microfibrillar keratin. The polypeptide is Keratin, type II microfibrillar, component 7C (Ovis aries (Sheep)).